The sequence spans 137 residues: Large ribosomal subunit protein uL16 (137 aa).

It belongs to the universal ribosomal protein uL16 family. Part of the 50S ribosomal subunit.

In terms of biological role, binds 23S rRNA and is also seen to make contacts with the A and possibly P site tRNAs. This Xanthomonas campestris pv. campestris (strain 8004) protein is Large ribosomal subunit protein uL16.